The primary structure comprises 360 residues: Phospho-N-acetylmuramoyl-pentapeptide-transferase (360 aa).

A run of 10 helical transmembrane segments spans residues 25–45 (RGILGVLTALILALCLGPWMI), 73–93 (TMGGALILSAIAISTLLWADL), 97–117 (YVWTVLAVTLLFGAIGWVDDY), 132–152 (WKYFWQSVFGLGAALFLYMTA), 167–187 (TIEIPLGAAFIVLTYFVIVGS), 199–219 (GLAIMPTVMVGGALGIFCYLS), 236–256 (AGELIVFCGALIGAGLGFLWF), 263–283 (VFMGDVGALALGAALGTIAVI), 288–308 (VVLFIMGGVFVMETLSVMIQV), and 338–358 (VIVRFWIITVVLVLIGLATLK).

This sequence belongs to the glycosyltransferase 4 family. MraY subfamily. Mg(2+) is required as a cofactor.

It localises to the cell inner membrane. It catalyses the reaction UDP-N-acetyl-alpha-D-muramoyl-L-alanyl-gamma-D-glutamyl-meso-2,6-diaminopimeloyl-D-alanyl-D-alanine + di-trans,octa-cis-undecaprenyl phosphate = di-trans,octa-cis-undecaprenyl diphospho-N-acetyl-alpha-D-muramoyl-L-alanyl-D-glutamyl-meso-2,6-diaminopimeloyl-D-alanyl-D-alanine + UMP. It participates in cell wall biogenesis; peptidoglycan biosynthesis. Catalyzes the initial step of the lipid cycle reactions in the biosynthesis of the cell wall peptidoglycan: transfers peptidoglycan precursor phospho-MurNAc-pentapeptide from UDP-MurNAc-pentapeptide onto the lipid carrier undecaprenyl phosphate, yielding undecaprenyl-pyrophosphoryl-MurNAc-pentapeptide, known as lipid I. The polypeptide is Phospho-N-acetylmuramoyl-pentapeptide-transferase (Azotobacter vinelandii (strain DJ / ATCC BAA-1303)).